The following is a 957-amino-acid chain: Melanoma-associated antigen E1 (957 aa).

The disordered stretch occupies residues 1 to 455 (MSLVSQNSRR…DSEGPKGAEG (455 aa)). Composition is skewed to polar residues over residues 85–96 (SEASSASGQPTI) and 104–130 (VLPTPSEGLSTSGPPTISKGLCTSVTL). Residues 138 to 162 (TSRPPTSSEEPSTSVPPTASEVPST) show a composition bias toward low complexity. 5 stretches are compositionally biased toward polar residues: residues 219–244 (GLSTSVQATPDEGPSTSVPPTATEGL), 268–320 (PSTS…STSV), 329–344 (STSVPPTATEELSTSV), 364–380 (LSTSVPPTASDGSDTSV), and 414–428 (TLFSSSASVDRNPSK). MAGE domains lie at 491 to 690 (MEQN…YNEA) and 745 to 936 (LESK…YREA). The interaction with DTNA stretch occupies residues 743-957 (SRLESKARKL…HRQIFVHNFR (215 aa)).

In terms of assembly, interacts with DTNA. Interacts with TRIM28.

It is found in the cytoplasm. The protein localises to the perinuclear region. It localises to the nucleus. The protein resides in the cell membrane. Functionally, may enhance ubiquitin ligase activity of RING-type zinc finger-containing E3 ubiquitin-protein ligases. Proposed to act through recruitment and/or stabilization of the Ubl-conjugating enzyme (E2) at the E3:substrate complex. This is Melanoma-associated antigen E1 (MAGEE1) from Homo sapiens (Human).